The following is a 581-amino-acid chain: 2-isopropylmalate synthase (581 aa).

Residues 32–306 (PQWCAVDLRD…DPQLDFSDIK (275 aa)) enclose the Pyruvate carboxyltransferase domain. Mg(2+) is bound by residues aspartate 41, histidine 245, histidine 247, and asparagine 281. Residues 455–581 (RSAPVEQIAL…KHQQLQNGGV (127 aa)) are regulatory domain.

The protein belongs to the alpha-IPM synthase/homocitrate synthase family. LeuA type 2 subfamily. In terms of assembly, homodimer. Mg(2+) is required as a cofactor.

It is found in the cytoplasm. The enzyme catalyses 3-methyl-2-oxobutanoate + acetyl-CoA + H2O = (2S)-2-isopropylmalate + CoA + H(+). Its pathway is amino-acid biosynthesis; L-leucine biosynthesis; L-leucine from 3-methyl-2-oxobutanoate: step 1/4. Its function is as follows. Catalyzes the condensation of the acetyl group of acetyl-CoA with 3-methyl-2-oxobutanoate (2-ketoisovalerate) to form 3-carboxy-3-hydroxy-4-methylpentanoate (2-isopropylmalate). The polypeptide is 2-isopropylmalate synthase (Corynebacterium efficiens (strain DSM 44549 / YS-314 / AJ 12310 / JCM 11189 / NBRC 100395)).